The following is a 95-amino-acid chain: Beta-defensin 132 (95 aa).

Residues 1–22 form the signal peptide; sequence MKFLLLVLAALRFLTQVIPASA. 3 cysteine pairs are disulfide-bonded: C27–C55, C35–C49, and C39–C56. The interval 72 to 95 is disordered; the sequence is GNHWQSRRRNTQRKDKKQQTTVTS. The span at 76–87 shows a compositional bias: basic residues; the sequence is QSRRRNTQRKDK.

Belongs to the beta-defensin family.

The protein resides in the secreted. Its function is as follows. Has antibacterial activity. The polypeptide is Beta-defensin 132 (DEFB132) (Pongo pygmaeus (Bornean orangutan)).